The sequence spans 417 residues: Acetyltransferase cdmC (417 aa).

Asn-64 is a glycosylation site (N-linked (GlcNAc...) asparagine). The next 3 membrane-spanning stretches (helical) occupy residues 308-328 (IPDG…GYLV), 357-377 (GIFW…YPLL), and 389-409 (LVES…AFIL).

This sequence belongs to the wax synthase family.

It is found in the membrane. The enzyme catalyses chrodrimanin A + acetyl-CoA = chrodrimanin B + CoA. It participates in secondary metabolite biosynthesis; terpenoid biosynthesis. In terms of biological role, acetyltransferase; part of the gene cluster that mediates the biosynthesis of chrodrimanin B, a meroterpenoid that acts as a potent blocker of insect GABA-gated chloride channels. The first step of the pathway is the biosynthesis of 6-hydroxymellein by the polyketide synthase cdmE. The prenyltransferase cdmH acts as a 6-hydroxymellein 5-farnesyltransferase and produces the hydrophobic metabolite verruculide C. The FAD-dependent monooxygenase cdmI further converts verruculide C into verruculide B. The terpene cyclase cdmG then produced the pentacyclic molecule 3-hydroxypentacecilide A, the backbone structure of chrodrimanin B, via folding the farnesyl moiety of the substrate into the chair-boat conformation. The short-chain dehydrogenase/reductase cdmF functions as the 3-OH dehydrogenase that oxidizes the C-3 hydroxyl group of 3-hydroxypentacecilide A and produces chrodrimanin C, the dehydrogenated product of 3-hydroxypentacecilide A. The cytochrome P450 monooxygenase cdmJ then accepts both 3-hydroxypentacecilide A and chrodrimanin C and functions as a C-7-beta-hydroxylase to produce respectively chrodrimanin H and chrodrimanin F. The dioxygenase cdmA accepts chrodrimanin H to afford chrodrimanin E, which is further transformed to chrodrimanin A by the dioxygenase cdmD. CdmA can also accept chrodrimanin C as substrate to convert it into verruculide A, which is further converted into chrodrimanin T by cdmD. The last step of the biosynthesis is proposed to be performed by the acetyltransferase cdmC which acetylates chrodrimanin A to yield chrodrimanin B. The pathway may also lead to the production of additional shunt products, including chrodrimanins T and U. This is Acetyltransferase cdmC from Talaromyces verruculosus (Penicillium verruculosum).